The sequence spans 813 residues: Putative ATPase, plasma membrane-like (813 aa).

The Cytoplasmic segment spans residues 1–66 (MATGDSLEDI…KKKEHITLRF (66 aa)). A helical transmembrane segment spans residues 67–86 (FALMFKPLSWVIQAAAIMAM). Topologically, residues 87–94 (LFANGDGR) are extracellular. The chain crosses the membrane as a helical span at residues 95 to 115 (QLFLGIVCLLIVNTIICYLKE). At 116–245 (DDAANVVAMA…GHFRKVVTEI (130 aa)) the chain is on the cytoplasmic side. Residues 246 to 266 (ENLCVISIAIGISIEVIVMYW) traverse the membrane as a helical segment. The Extracellular segment spans residues 267-275 (IQRRNFSDV). A helical transmembrane segment spans residues 276 to 293 (INNLLVLVIGGIPLAMPT). Residues 294 to 555 (VLYVIMVTGS…ASRAILQQMK (262 aa)) are Cytoplasmic-facing. The 4-aspartylphosphate intermediate role is filled by D331. 2 residues coordinate Mg(2+): D500 and D504. The helical transmembrane segment at 556-577 (HYTIYAVSITIRVVFGFMFIAL) threads the bilayer. Topologically, residues 578–582 (IWKFD) are extracellular. Residues 583 to 605 (FSPFMVLAIALLNEETTKAITMD) traverse the membrane as a helical segment. The Cytoplasmic segment spans residues 606 to 622 (NVTNPSPTPDSLKLKEI). Residues 623-643 (FATGVVYGSYMALITVVFFWA) form a helical membrane-spanning segment. Topologically, residues 644–664 (AYRTDIFPRTFHVRDLRGNEA) are extracellular. Residues 665-685 (EMMCALYLQVSIMSQALFFVI) traverse the membrane as a helical segment. Residues 686–697 (QSRSWFFVERPG) lie on the Cytoplasmic side of the membrane. The helical transmembrane segment at 698 to 718 (ELLFLSFVTVQTIATTLAVYA) threads the bilayer. Residues 719–726 (SWETARIE) lie on the Extracellular side of the membrane. The helical transmembrane segment at 727–747 (GIGWSWAGVIWLYNIIFFFPL) threads the bilayer. The Cytoplasmic segment spans residues 748–813 (DIMKFGIRYI…SQDLRGVGWV (66 aa)). S776 is subject to Phosphoserine.

The protein belongs to the cation transport ATPase (P-type) (TC 3.A.3) family. Type IIIA subfamily.

It localises to the membrane. In Arabidopsis thaliana (Mouse-ear cress), this protein is Putative ATPase, plasma membrane-like.